The sequence spans 593 residues: RNA-binding protein 47 (593 aa).

A compositionally biased stretch (low complexity) spans 1–20; that stretch reads MTAEDSTAAMSSDSAAGSSA. The tract at residues 1-25 is disordered; it reads MTAEDSTAAMSSDSAAGSSAKVPEG. RRM domains are found at residues 71-149, 151-233, and 246-318; these read CEVF…CSVD, CRLF…WAEP, and KILY…LAKP. Residue Arg332 is modified to Omega-N-methylarginine. An asymmetric dimethylarginine; alternate mark is found at Arg394 and Arg405. An omega-N-methylarginine; alternate mark is found at Arg394 and Arg405.

This sequence belongs to the RRM RBM47 family. As to quaternary structure, homodimer. Interacts with A1CF. Interacts with APOBEC1; form an mRNA editing complex. Interacts with RBPMS.

The protein resides in the nucleus. Its subcellular location is the cytoplasm. Single-stranded RNA-binding protein that functions in a variety of RNA processes, including alternative splicing, RNA stabilization, and RNA editing. Functions as an enzyme-substrate adapter for the cytidine deaminase APOBEC1. With APOBEC1 forms an mRNA editing complex involved into cytidine to uridine editing of a variety of mRNA molecules. Through the binding of their 3'UTR, also stabilizes a variety of mRNAs and regulates the expression of genes such as the interferon alpha/beta receptor and interleukin-10. Also involved in the alternative splicing of several genes including TJP1. Binds the pre-mRNA (U)GCAUG consensus sequences in downstream intronic regions of alternative exons, regulating their exclusion and inclusion into mRNAs. Independently of its RNA-binding activity, could negatively regulate MAVS by promoting its lysosomal degradation. This is RNA-binding protein 47 from Homo sapiens (Human).